The chain runs to 234 residues: Opacity protein opA56 (234 aa).

A1 is a signal peptide.

It belongs to the opacity porin family.

Its subcellular location is the cell outer membrane. Its function is as follows. Implicated in a number of adherence functions. OPA proteins are implicated in pathogenesis and are subject to phase variation. In Neisseria gonorrhoeae, this protein is Opacity protein opA56 (opaF).